We begin with the raw amino-acid sequence, 494 residues long: Ketol-acid reductoisomerase (NADP(+)) (494 aa).

The 195-residue stretch at 14-208 (LDQLGRCRFM…GGHRAGCLES (195 aa)) folds into the KARI N-terminal Rossmann domain. NADP(+)-binding positions include 45–48 (CGAQ), Arg68, Arg76, Ser78, and 108–110 (DKQ). The active site involves His132. Position 158 (Gly158) interacts with NADP(+). 2 KARI C-terminal knotted domains span residues 209-344 (SFVA…NYPE) and 345-487 (TDVE…MTDM). 4 residues coordinate Mg(2+): Asp217, Glu221, Glu389, and Glu393. Ser414 contributes to the substrate binding site.

This sequence belongs to the ketol-acid reductoisomerase family. Mg(2+) is required as a cofactor.

The enzyme catalyses (2R)-2,3-dihydroxy-3-methylbutanoate + NADP(+) = (2S)-2-acetolactate + NADPH + H(+). It carries out the reaction (2R,3R)-2,3-dihydroxy-3-methylpentanoate + NADP(+) = (S)-2-ethyl-2-hydroxy-3-oxobutanoate + NADPH + H(+). It functions in the pathway amino-acid biosynthesis; L-isoleucine biosynthesis; L-isoleucine from 2-oxobutanoate: step 2/4. Its pathway is amino-acid biosynthesis; L-valine biosynthesis; L-valine from pyruvate: step 2/4. In terms of biological role, involved in the biosynthesis of branched-chain amino acids (BCAA). Catalyzes an alkyl-migration followed by a ketol-acid reduction of (S)-2-acetolactate (S2AL) to yield (R)-2,3-dihydroxy-isovalerate. In the isomerase reaction, S2AL is rearranged via a Mg-dependent methyl migration to produce 3-hydroxy-3-methyl-2-ketobutyrate (HMKB). In the reductase reaction, this 2-ketoacid undergoes a metal-dependent reduction by NADPH to yield (R)-2,3-dihydroxy-isovalerate. The sequence is that of Ketol-acid reductoisomerase (NADP(+)) from Vibrio parahaemolyticus serotype O3:K6 (strain RIMD 2210633).